The chain runs to 205 residues: Beta-crystallin B2 (205 aa).

Ala-2 carries the N-acetylalanine modification. Residues 2-16 (ASDHQTQAGKPQSLN) form an N-terminal arm region. Beta/gamma crystallin 'Greek key' domains are found at residues 17-56 (PKII…LVQA) and 57-101 (GPWV…RPIK). The interval 102-106 (VDSQE) is connecting peptide. Beta/gamma crystallin 'Greek key' domains follow at residues 107–148 (HKII…RVQS) and 149–191 (GTWV…RRIR). Residues 193-205 (MQWHQRGAFHPSN) form a C-terminal arm region.

It belongs to the beta/gamma-crystallin family. As to quaternary structure, homo/heterodimer, or complexes of higher-order. The structure of beta-crystallin oligomers seems to be stabilized through interactions between the N-terminal arms.

Functionally, crystallins are the dominant structural components of the vertebrate eye lens. This Homo sapiens (Human) protein is Beta-crystallin B2 (CRYBB2).